We begin with the raw amino-acid sequence, 279 residues long: Ribosomal RNA small subunit methyltransferase A (279 aa).

6 residues coordinate S-adenosyl-L-methionine: Asn27, Leu29, Gly54, Glu76, Asp102, and Asn127.

Belongs to the class I-like SAM-binding methyltransferase superfamily. rRNA adenine N(6)-methyltransferase family. RsmA subfamily.

The protein localises to the cytoplasm. The catalysed reaction is adenosine(1518)/adenosine(1519) in 16S rRNA + 4 S-adenosyl-L-methionine = N(6)-dimethyladenosine(1518)/N(6)-dimethyladenosine(1519) in 16S rRNA + 4 S-adenosyl-L-homocysteine + 4 H(+). Functionally, specifically dimethylates two adjacent adenosines (A1518 and A1519) in the loop of a conserved hairpin near the 3'-end of 16S rRNA in the 30S particle. May play a critical role in biogenesis of 30S subunits. The polypeptide is Ribosomal RNA small subunit methyltransferase A (Mesorhizobium japonicum (strain LMG 29417 / CECT 9101 / MAFF 303099) (Mesorhizobium loti (strain MAFF 303099))).